Here is a 660-residue protein sequence, read N- to C-terminus: MTNIIELPEVLANQIAAGEVVERPASVVKELVENAIDAKSSQITVEIEESGLKMIQVTDNGEGMSHEDLPLSLRRHATSKIKSQSDLFRIRTLGFRGEALPSVASISKITIKTATKEVTHGSLLIATGGEIETLEAISTPTGTKIKVENLFYNTPARLKYMKSLQAELAHIVDVVNRLSLAHPEVAFTLISDGRQLTQTSGTGDLRQAIAGIYGLNTTKKMLAISNADLDFEVSGYVSLPELTRANRNYMTILVNGRYIKNFLLNRAILDGYGSKLMVGRFPIVVIDIQIDPYLADVNVHPTKQEVRISKERELMALISTAISESLKEQDLIPDALENLAKSSTRHFSKPEQTQLPLQSRGLYYDPQKNDFFVKESAVSEKIPETDFYFGTVDNSVKVEKAELLPHSEEVIGPSSVKHASRPQNTFTETDHPNLDLKNRQKLSQMLTRLENEEQSVFPELDYFGQMHGTYLFAQGKDGLFIIDQHAAQERVKYEYYRDKIGEVDSSLQQLLVPYLFEFSGSDFINLQEKMALLNEVGIFLEVYGHNTFILREHPIWMKEEEIASGVYEMCDMLLLTNEVSIKTYRAELAIMMSCKRSIKANHSLDDYSARNLLLQLAQCQNPYNCPHGRPVLINFSKADMEKMFRRIQENHTSLRELGKY.

The protein belongs to the DNA mismatch repair MutL/HexB family.

This protein is involved in the repair of mismatches in DNA. It is required for dam-dependent methyl-directed DNA mismatch repair. May act as a 'molecular matchmaker', a protein that promotes the formation of a stable complex between two or more DNA-binding proteins in an ATP-dependent manner without itself being part of a final effector complex. This is DNA mismatch repair protein MutL from Streptococcus pyogenes serotype M3 (strain ATCC BAA-595 / MGAS315).